Here is a 229-residue protein sequence, read N- to C-terminus: Probable calcium-binding protein CML22 (229 aa).

4 consecutive EF-hand domains span residues 53-88, 89-124, 145-180, and 184-219; these read EGLR…LKLS, LSDE…IYLL, SIFD…EDYP, and SPSH…WVGL. The Ca(2+) site is built by Asp-66, Asp-68, Asn-70, Thr-72, and Glu-77.

Functionally, potential calcium sensor. The polypeptide is Probable calcium-binding protein CML22 (CML22) (Arabidopsis thaliana (Mouse-ear cress)).